Reading from the N-terminus, the 446-residue chain is Histidine--tRNA ligase (446 aa).

This sequence belongs to the class-II aminoacyl-tRNA synthetase family. Homodimer.

It localises to the cytoplasm. It carries out the reaction tRNA(His) + L-histidine + ATP = L-histidyl-tRNA(His) + AMP + diphosphate + H(+). The protein is Histidine--tRNA ligase of Burkholderia cenocepacia (strain ATCC BAA-245 / DSM 16553 / LMG 16656 / NCTC 13227 / J2315 / CF5610) (Burkholderia cepacia (strain J2315)).